The primary structure comprises 398 residues: Homeobox protein knotted-1-like 1 (398 aa).

3 disordered regions span residues 20–61, 78–102, and 241–273; these read SPIS…HHHQ, NCFR…ASSS, and LNNP…EIDP. The span at 23-56 shows a compositional bias: low complexity; the sequence is SSSNKNDNTSDTNNNNNNNNSSNYGPGYNNTNNN. Over residues 87 to 102 the composition is skewed to polar residues; the sequence is PNNNNNPSVKSEASSS. In terms of domain architecture, ELK spans 279–299; sequence ELKNHLLKKYSGYLSSLKQEL. The segment at residues 300–363 is a DNA-binding region (homeobox; TALE-type); it reads SKKKKKGKLP…NQRKRHWKPS (64 aa).

This sequence belongs to the TALE/KNOX homeobox family. As to quaternary structure, may form heterodimeric complex with the TALE/BELL proteins BEL1, BLH2, BLH8/PNF and BLH9/PNY. Interacts with OFP1, OFP2, OFP4, OFP6 and OFP12. Interacts with CCT7 and CCT8. Interacts with KNATM-B. Binds to AGO10/PNH. Interacts with BZIP30. Expressed in the vegetative meristem. Present in the base of flower primordia.

It localises to the nucleus. Functionally, may play a role in meristem function, and may be involved in maintaining cells in an undifferentiated, meristematic state, and its expression disappears at the same time the shoot apex undergoes the transition from vegetative to reproductive development. Positive regulator of LATERAL ORGAN BOUNDARIES (LOB). Probably binds to the DNA sequence 5'-TGAC-3'. Able to traffic from the L1 to the L2/L3 layers of the meristem, presumably through plasmodesmata. In Arabidopsis thaliana (Mouse-ear cress), this protein is Homeobox protein knotted-1-like 1 (KNAT1).